Here is a 323-residue protein sequence, read N- to C-terminus: tRNA U34 carboxymethyltransferase (323 aa).

Carboxy-S-adenosyl-L-methionine-binding positions include lysine 91, tryptophan 105, lysine 110, glycine 130, 152 to 154, 181 to 182, methionine 196, tyrosine 200, and arginine 315; these read DPT and IE.

This sequence belongs to the class I-like SAM-binding methyltransferase superfamily. CmoB family. Homotetramer.

The enzyme catalyses carboxy-S-adenosyl-L-methionine + 5-hydroxyuridine(34) in tRNA = 5-carboxymethoxyuridine(34) in tRNA + S-adenosyl-L-homocysteine + H(+). Its function is as follows. Catalyzes carboxymethyl transfer from carboxy-S-adenosyl-L-methionine (Cx-SAM) to 5-hydroxyuridine (ho5U) to form 5-carboxymethoxyuridine (cmo5U) at position 34 in tRNAs. The chain is tRNA U34 carboxymethyltransferase from Escherichia coli (strain K12 / MC4100 / BW2952).